The following is a 377-amino-acid chain: Endoplasmic reticulum-Golgi intermediate compartment protein 2 (377 aa).

The Cytoplasmic segment spans residues 1-33; it reads MRRLNRKKTLSLVKELDAFPKVPESYVETSASG. The chain crosses the membrane as a helical span at residues 34–54; the sequence is GTVSLIAFTTMALLTIMEFSV. Residues 55-319 lie on the Lumenal side of the membrane; sequence YQDTWMKYEY…PFWQFFVRLC (265 aa). The chain crosses the membrane as a helical span at residues 320–340; it reads GIVGGIFSTTGMLHGIGKFIV. Over 341-377 the chain is Cytoplasmic; it reads EIICCRFRLGSYKPVNSVPFEDGHTDNHLPLLENNTH.

The protein belongs to the ERGIC family. In terms of assembly, may form a heteromeric complex composed of ERGIC1, ERGIC2 and ERGIC3. Interacts with ERGIC3, the interaction is required for the stable expression of both proteins. May interact with EEF1A1.

The protein localises to the endoplasmic reticulum-Golgi intermediate compartment membrane. It localises to the golgi apparatus. It is found in the cis-Golgi network membrane. Its subcellular location is the endoplasmic reticulum membrane. The protein resides in the cytoplasm. The protein localises to the nucleus. In terms of biological role, possible role in transport between endoplasmic reticulum and Golgi. In Macaca fascicularis (Crab-eating macaque), this protein is Endoplasmic reticulum-Golgi intermediate compartment protein 2 (ERGIC2).